The following is a 406-amino-acid chain: Peptidase T (406 aa).

Residue histidine 78 participates in Zn(2+) binding. The active site involves aspartate 80. Zn(2+) is bound at residue aspartate 139. Catalysis depends on glutamate 173, which acts as the Proton acceptor. Zn(2+) is bound by residues glutamate 174, aspartate 196, and histidine 378.

It belongs to the peptidase M20B family. Requires Zn(2+) as cofactor.

The protein resides in the cytoplasm. The catalysed reaction is Release of the N-terminal residue from a tripeptide.. Functionally, cleaves the N-terminal amino acid of tripeptides. The chain is Peptidase T from Clostridium perfringens (strain SM101 / Type A).